The sequence spans 245 residues: Photosystem II protein PSBS1 (245 aa).

Residues 1-25 (MAMTLSTKAFAQRGVSARKNTVRVY) constitute a chloroplast transit peptide. The next 4 membrane-spanning stretches (helical) occupy residues 72–92 (LFVG…EILT), 108–128 (GIEV…AAVL), 185–205 (LGFA…LAQF), and 217–237 (EFGL…EGSG).

The protein belongs to the ELIP/psbS family.

The protein resides in the plastid. It localises to the chloroplast thylakoid membrane. Its function is as follows. Required for non-photochemical quenching (NPQ), a mechanism that converts and dissipates the harmful excess absorbed light energy into heat and protect the photosynthetic apparatus from photo-oxidative damage. Seems involved in the activation of NPQ, possibly by promoting conformational changes required for activation of LHCSR3-dependent quenching in the antenna of photosystem II (PSII). This chain is Photosystem II protein PSBS1, found in Chlamydomonas reinhardtii (Chlamydomonas smithii).